The following is a 104-amino-acid chain: Large ribosomal subunit protein uL24 (104 aa).

This sequence belongs to the universal ribosomal protein uL24 family. As to quaternary structure, part of the 50S ribosomal subunit.

Its function is as follows. One of two assembly initiator proteins, it binds directly to the 5'-end of the 23S rRNA, where it nucleates assembly of the 50S subunit. One of the proteins that surrounds the polypeptide exit tunnel on the outside of the subunit. This chain is Large ribosomal subunit protein uL24, found in Shewanella pealeana (strain ATCC 700345 / ANG-SQ1).